A 532-amino-acid polypeptide reads, in one-letter code: Glutamate--cysteine ligase (532 aa).

This sequence belongs to the glutamate--cysteine ligase type 1 family. Type 1 subfamily.

The enzyme catalyses L-cysteine + L-glutamate + ATP = gamma-L-glutamyl-L-cysteine + ADP + phosphate + H(+). The protein operates within sulfur metabolism; glutathione biosynthesis; glutathione from L-cysteine and L-glutamate: step 1/2. The chain is Glutamate--cysteine ligase from Pseudomonas fluorescens (strain ATCC BAA-477 / NRRL B-23932 / Pf-5).